Reading from the N-terminus, the 75-residue chain is UPF0154 protein MYPU_1460 (75 aa).

Residues 8–28 (GLIVGLSILFFIIGGVVAFFV) form a helical membrane-spanning segment.

The protein belongs to the UPF0154 family.

The protein localises to the membrane. The protein is UPF0154 protein MYPU_1460 of Mycoplasmopsis pulmonis (strain UAB CTIP) (Mycoplasma pulmonis).